The chain runs to 262 residues: Ribosomal RNA small subunit methyltransferase A (262 aa).

S-adenosyl-L-methionine is bound by residues Asn-13, Leu-15, Gly-40, Glu-61, Asp-85, and Asn-104.

Belongs to the class I-like SAM-binding methyltransferase superfamily. rRNA adenine N(6)-methyltransferase family. RsmA subfamily.

It is found in the cytoplasm. The enzyme catalyses adenosine(1518)/adenosine(1519) in 16S rRNA + 4 S-adenosyl-L-methionine = N(6)-dimethyladenosine(1518)/N(6)-dimethyladenosine(1519) in 16S rRNA + 4 S-adenosyl-L-homocysteine + 4 H(+). In terms of biological role, specifically dimethylates two adjacent adenosines (A1518 and A1519) in the loop of a conserved hairpin near the 3'-end of 16S rRNA in the 30S particle. May play a critical role in biogenesis of 30S subunits. The sequence is that of Ribosomal RNA small subunit methyltransferase A from Chromobacterium violaceum (strain ATCC 12472 / DSM 30191 / JCM 1249 / CCUG 213 / NBRC 12614 / NCIMB 9131 / NCTC 9757 / MK).